The chain runs to 234 residues: tRNA1(Val) (adenine(37)-N6)-methyltransferase (234 aa).

It belongs to the methyltransferase superfamily. tRNA (adenine-N(6)-)-methyltransferase family.

It is found in the cytoplasm. It catalyses the reaction adenosine(37) in tRNA1(Val) + S-adenosyl-L-methionine = N(6)-methyladenosine(37) in tRNA1(Val) + S-adenosyl-L-homocysteine + H(+). Its function is as follows. Specifically methylates the adenine in position 37 of tRNA(1)(Val) (anticodon cmo5UAC). The polypeptide is tRNA1(Val) (adenine(37)-N6)-methyltransferase (Aliivibrio salmonicida (strain LFI1238) (Vibrio salmonicida (strain LFI1238))).